Consider the following 284-residue polypeptide: MEMO1 family protein YN1551_0739 (284 aa).

It belongs to the MEMO1 family.

The chain is MEMO1 family protein YN1551_0739 from Saccharolobus islandicus (strain Y.N.15.51 / Yellowstone #2) (Sulfolobus islandicus).